Reading from the N-terminus, the 206-residue chain is High frequency lysogenization protein HflD homolog (206 aa).

This sequence belongs to the HflD family.

Its subcellular location is the cytoplasm. The protein localises to the cell inner membrane. This is High frequency lysogenization protein HflD homolog from Pseudomonas aeruginosa (strain LESB58).